The sequence spans 118 residues: Myotrophin (118 aa).

ANK repeat units lie at residues Met-1–Arg-30, Gly-34–Asp-65, and His-67–Gly-98.

The protein belongs to the myotrophin family.

The protein localises to the cytoplasm. It localises to the nucleus. It is found in the perinuclear region. In terms of biological role, regulates NF-kappa-B transcription factor activity. Promotes growth of cardiomyocytes, but not cardiomyocyte proliferation. Promotes cardiac muscle hypertrophy. Plays a role in the regulation of the growth of actin filaments. Inhibits the activity of the F-actin-capping protein complex. The protein is Myotrophin (MTPN) of Gallus gallus (Chicken).